Here is a 320-residue protein sequence, read N- to C-terminus: ATP-dependent 6-phosphofructokinase (320 aa).

G11 contributes to the ATP binding site. 21 to 25 contacts ADP; it reads RAVVR. ATP contacts are provided by residues 72–73 and 102–105; these read RY and GDGS. Residue D103 coordinates Mg(2+). 125 to 127 contacts substrate; it reads TID. Residue D127 is the Proton acceptor of the active site. Residue R154 participates in ADP binding. Substrate-binding positions include R162 and 169 to 171; that span reads MGR. ADP contacts are provided by residues 185 to 187, R211, and 213 to 215; these read GAD and KKH. Substrate contacts are provided by residues E222, R243, and 249-252; that span reads HVVR.

It belongs to the phosphofructokinase type A (PFKA) family. ATP-dependent PFK group I subfamily. Prokaryotic clade 'B1' sub-subfamily. Homotetramer. Mg(2+) is required as a cofactor.

It localises to the cytoplasm. The catalysed reaction is beta-D-fructose 6-phosphate + ATP = beta-D-fructose 1,6-bisphosphate + ADP + H(+). The protein operates within carbohydrate degradation; glycolysis; D-glyceraldehyde 3-phosphate and glycerone phosphate from D-glucose: step 3/4. With respect to regulation, allosterically activated by ADP and other diphosphonucleosides, and allosterically inhibited by phosphoenolpyruvate. Functionally, catalyzes the phosphorylation of D-fructose 6-phosphate to fructose 1,6-bisphosphate by ATP, the first committing step of glycolysis. The chain is ATP-dependent 6-phosphofructokinase from Enterococcus faecalis (strain ATCC 700802 / V583).